A 441-amino-acid chain; its full sequence is Serine carboxypeptidase-like 2 (441 aa).

The N-terminal stretch at 1–29 is a signal peptide; the sequence is MANKYFSSVLKSLLLLLHLVFLSKQHVDS. 3 disulfide bridges follow: Cys-88-Cys-331, Cys-252-Cys-266, and Cys-290-Cys-297. Asn-109 carries an N-linked (GlcNAc...) asparagine glycan. The active site involves Ser-184. Asn-350 carries an N-linked (GlcNAc...) asparagine glycan. Asp-366 is a catalytic residue. Asn-382 carries an N-linked (GlcNAc...) asparagine glycan. The active site involves His-419.

This sequence belongs to the peptidase S10 family. Expressed in seedlings and roots.

The protein resides in the secreted. Probable carboxypeptidase. The protein is Serine carboxypeptidase-like 2 (SCPL2) of Arabidopsis thaliana (Mouse-ear cress).